A 269-amino-acid chain; its full sequence is Subtilisin Savinase (269 aa).

A Ca(2+)-binding site is contributed by Q2. Positions 5–268 (PWGISRVQAP…SGLVNAEAAT (264 aa)) constitute a Peptidase S8 domain. Residue D32 is the Charge relay system of the active site. D40 serves as a coordination point for Ca(2+). Catalysis depends on H62, which acts as the Charge relay system. Positions 73, 75, 77, 79, 163, 165, and 168 each coordinate Ca(2+). The Charge relay system role is filled by S215.

This sequence belongs to the peptidase S8 family. Ca(2+) is required as a cofactor.

The protein resides in the secreted. The enzyme catalyses Hydrolysis of proteins with broad specificity for peptide bonds, and a preference for a large uncharged residue in P1. Hydrolyzes peptide amides.. Its function is as follows. Subtilisin is an extracellular alkaline serine protease, it catalyzes the hydrolysis of proteins and peptide amides. The protein is Subtilisin Savinase of Lederbergia lenta (Bacillus lentus).